Consider the following 223-residue polypeptide: Neurotrophic factor BDNF precursor form (223 aa).

The signal sequence occupies residues 1–5; the sequence is SCMKA. Positions 6-114 are excised as a propeptide; sequence APMKEVGVRG…AANMSXRVRR (109 aa). A glycan (N-linked (GlcNAc...) asparagine) is linked at Asn107. Intrachain disulfides connect Cys127-Cys194 and Cys172-Cys223.

It belongs to the NGF-beta family.

Its subcellular location is the secreted. In terms of biological role, promotes the survival of neuronal populations that are all located either in the central nervous system or directly connected to it. This chain is Neurotrophic factor BDNF precursor form (BDNF), found in Eryx jayakari (Arabian sand boa).